The sequence spans 148 residues: Large ribosomal subunit protein uL11 (148 aa).

Residues 89-108 (EKKKGSGAHKPGKEKVGQVT) are disordered.

Belongs to the universal ribosomal protein uL11 family. As to quaternary structure, part of the ribosomal stalk of the 50S ribosomal subunit. Interacts with L10 and the large rRNA to form the base of the stalk. L10 forms an elongated spine to which L12 dimers bind in a sequential fashion forming a multimeric L10(L12)X complex. Post-translationally, one or more lysine residues are methylated.

Forms part of the ribosomal stalk which helps the ribosome interact with GTP-bound translation factors. This chain is Large ribosomal subunit protein uL11, found in Anaeromyxobacter sp. (strain Fw109-5).